The sequence spans 278 residues: Sulfur carrier protein FdhD (278 aa).

Cysteine 121 functions as the Cysteine persulfide intermediate in the catalytic mechanism. 260–265 (FCKPGR) serves as a coordination point for Mo-bis(molybdopterin guanine dinucleotide).

Belongs to the FdhD family.

The protein localises to the cytoplasm. Its function is as follows. Required for formate dehydrogenase (FDH) activity. Acts as a sulfur carrier protein that transfers sulfur from IscS to the molybdenum cofactor prior to its insertion into FDH. The protein is Sulfur carrier protein FdhD of Klebsiella pneumoniae subsp. pneumoniae (strain ATCC 700721 / MGH 78578).